Here is a 355-residue protein sequence, read N- to C-terminus: Class E basic helix-loop-helix protein 22 (355 aa).

Disordered regions lie at residues 34 to 90 (AFRS…GGGG) and 128 to 215 (GRGS…KEQK). 2 stretches are compositionally biased toward gly residues: residues 81 to 90 (GGGGASGGGG) and 185 to 207 (GGSG…GGGS). Residues 216–270 (ALRLNINARERRRMHDLNDALDELRAVIPYAHSPSVRKLSKIATLLLAKNYILMQ) form the bHLH domain.

As to quaternary structure, interacts with PRDM8. Brain-specific, with the highest expression in the cerebellum.

The protein localises to the nucleus. Its function is as follows. Inhibits DNA binding of TCF3/E47 homodimers and TCF3 (E47)/NEUROD1 heterodimers and acts as a strong repressor of Neurod1 and Myod-responsive genes, probably by heterodimerization with class a basic helix-loop-helix factors. Despite the presence of an intact basic domain, does not bind to DNA. In the brain, may function as an area-specific transcription factor that regulates the postmitotic acquisition of area identities and elucidate the genetic hierarchy between progenitors and postmitotic neurons driving neocortical arealization. May be required for the survival of a specific population of inhibitory neurons in the superficial laminae of the spinal cord dorsal horn that may regulate pruritis. Seems to play a crucial role in the retinogenesis, in the specification of amacrine and bipolar subtypes. Forms with PRDM8 a transcriptional repressor complex controlling genes involved in neural development and neuronal differentiation. The protein is Class E basic helix-loop-helix protein 22 (Bhlhe22) of Mus musculus (Mouse).